Consider the following 298-residue polypeptide: Glycine--tRNA ligase alpha subunit (298 aa).

This sequence belongs to the class-II aminoacyl-tRNA synthetase family. As to quaternary structure, tetramer of two alpha and two beta subunits.

The protein localises to the cytoplasm. It carries out the reaction tRNA(Gly) + glycine + ATP = glycyl-tRNA(Gly) + AMP + diphosphate. The protein is Glycine--tRNA ligase alpha subunit of Helicobacter pylori (strain Shi470).